A 424-amino-acid chain; its full sequence is Protein arginine N-methyltransferase 2 (424 aa).

2 disordered regions span residues 67 to 89 (DEAQ…EQKS) and 151 to 212 (YEPL…SSRY). A compositionally biased stretch (polar residues) spans 71-89 (TETNGVNGETSSASTEQKS). Low complexity-rich tracts occupy residues 163-173 (TGQGEDAANEP) and 187-201 (ETTA…ASTE). Residues 205–424 (PDVTSSRYLD…YRLPLCKFMD (220 aa)) enclose the RMT2 domain. Residues Y212, M241, 261–266 (HGMGIV), 282–284 (EAH), 309–310 (WQ), and D329 each bind S-adenosyl-L-methionine.

This sequence belongs to the class I-like SAM-binding methyltransferase superfamily. RMT2 methyltransferase family. Monomer.

It localises to the cytoplasm. Its subcellular location is the nucleus. Functionally, S-adenosyl-L-methionine-dependent protein-arginine N-methyltransferase that methylates the delta-nitrogen atom of arginine residues to form N5-methylarginine (type IV) in target proteins. Monomethylates ribosomal protein L12. The protein is Protein arginine N-methyltransferase 2 of Aspergillus fumigatus (strain ATCC MYA-4609 / CBS 101355 / FGSC A1100 / Af293) (Neosartorya fumigata).